A 202-amino-acid chain; its full sequence is Small ribosomal subunit protein uS4 (202 aa).

Positions 21-42 (LSRKSPRRAYPPGQHGQARRKR) are disordered. The 63-residue stretch at 90–152 (MRLDNTVFRL…DRSRKLVETN (63 aa)) folds into the S4 RNA-binding domain.

Belongs to the universal ribosomal protein uS4 family. Part of the 30S ribosomal subunit. Contacts protein S5. The interaction surface between S4 and S5 is involved in control of translational fidelity.

One of the primary rRNA binding proteins, it binds directly to 16S rRNA where it nucleates assembly of the body of the 30S subunit. In terms of biological role, with S5 and S12 plays an important role in translational accuracy. This is Small ribosomal subunit protein uS4 from Synechocystis sp. (strain ATCC 27184 / PCC 6803 / Kazusa).